Consider the following 242-residue polypeptide: Carboxy-S-adenosyl-L-methionine synthase (242 aa).

S-adenosyl-L-methionine is bound by residues Y39, 64–66 (GCS), 89–90 (DN), 117–118 (DI), N132, and R199.

Belongs to the class I-like SAM-binding methyltransferase superfamily. Cx-SAM synthase family. In terms of assembly, homodimer.

It catalyses the reaction prephenate + S-adenosyl-L-methionine = carboxy-S-adenosyl-L-methionine + 3-phenylpyruvate + H2O. Its function is as follows. Catalyzes the conversion of S-adenosyl-L-methionine (SAM) to carboxy-S-adenosyl-L-methionine (Cx-SAM). In Vibrio atlanticus (strain LGP32) (Vibrio splendidus (strain Mel32)), this protein is Carboxy-S-adenosyl-L-methionine synthase.